Here is a 564-residue protein sequence, read N- to C-terminus: Tripeptidyl-peptidase 1 (564 aa).

A signal peptide spans 1–19; it reads MGLQACLLGLFALILSGKC. A propeptide spans 20–195 (removed in mature form); the sequence is SYSPEPDQRR…PEPQVTGTVG (176 aa). The cysteines at positions 111 and 122 are disulfide-linked. Residues 199 to 564 enclose the Peptidase S53 domain; sequence GVTPSVIRKR…PALPKTLLNP (366 aa). Residues asparagine 210 and asparagine 222 are each glycosylated (N-linked (GlcNAc...) asparagine). Catalysis depends on charge relay system residues glutamate 272 and aspartate 276. N-linked (GlcNAc...) asparagine glycans are attached at residues asparagine 286, asparagine 313, and asparagine 443. 2 disulfide bridges follow: cysteine 365-cysteine 527 and cysteine 523-cysteine 538. Serine 475 (charge relay system) is an active-site residue. Ca(2+)-binding residues include aspartate 518 and valine 519. Residues glycine 540, glycine 542, and aspartate 544 each contribute to the Ca(2+) site.

Monomer. Interacts with CLN5. Interacts with CLN3. Ca(2+) is required as a cofactor. Activated by autocatalytic proteolytical processing upon acidification. N-glycosylation is required for processing and activity.

It localises to the lysosome. The protein resides in the melanosome. It carries out the reaction Release of an N-terminal tripeptide from a polypeptide, but also has endopeptidase activity.. Lysosomal serine protease with tripeptidyl-peptidase I activity. May act as a non-specific lysosomal peptidase which generates tripeptides from the breakdown products produced by lysosomal proteinases. Requires substrates with an unsubstituted N-terminus. This is Tripeptidyl-peptidase 1 (TPP1) from Pongo abelii (Sumatran orangutan).